A 275-amino-acid polypeptide reads, in one-letter code: Nitrogenase iron protein 3 (275 aa).

Residue 9 to 16 (GKGGIGKS) coordinates ATP. Residue C97 participates in [4Fe-4S] cluster binding. An ADP-ribosylarginine; by dinitrogenase reductase ADP-ribosyltransferase modification is found at R100. C132 is a [4Fe-4S] cluster binding site.

The protein belongs to the NifH/BchL/ChlL family. As to quaternary structure, homodimer. [4Fe-4S] cluster serves as cofactor. The reversible ADP-ribosylation of Arg-100 inactivates the nitrogenase reductase and regulates nitrogenase activity.

The enzyme catalyses N2 + 8 reduced [2Fe-2S]-[ferredoxin] + 16 ATP + 16 H2O = H2 + 8 oxidized [2Fe-2S]-[ferredoxin] + 2 NH4(+) + 16 ADP + 16 phosphate + 6 H(+). Functionally, the key enzymatic reactions in nitrogen fixation are catalyzed by the nitrogenase complex, which has 2 components: the iron protein and the molybdenum-iron protein. The sequence is that of Nitrogenase iron protein 3 (nifH3) from Clostridium pasteurianum.